Here is a 493-residue protein sequence, read N- to C-terminus: EGF-containing fibulin-like extracellular matrix protein 1 (493 aa).

The first 17 residues, 1–17 (MLQTVFLTMLTLALVKS), serve as a signal peptide directing secretion. One can recognise an EGF-like 1; atypical domain in the interval 26–71 (YTQCTDGYEWDPVRQQCKDIDECDIVPDACKGGMKCVNHYGGYLCL). In terms of domain architecture, EGF-like 2; calcium-binding spans 173–213 (DIDECTSGTHNCRLDQVCINLRGSFTCHCLPGYQKRGEQCV). Cystine bridges form between Cys177–Cys190, Cys184–Cys199, Cys201–Cys212, Cys218–Cys228, Cys224–Cys237, Cys239–Cys252, Cys258–Cys268, Cys264–Cys277, Cys279–Cys292, Cys298–Cys309, Cys305–Cys318, Cys320–Cys332, Cys338–Cys350, Cys344–Cys359, and Cys365–Cys377. The 40-residue stretch at 214–253 (DIDECSVPPYCHQGCVNTPGSFYCQCNPGFQLAANNYTCV) folds into the EGF-like 3; calcium-binding domain. A glycan (N-linked (GlcNAc...) asparagine) is linked at Asn249. Positions 254–293 (DINECDASNQCAQQCYNILGSFICQCNQGYELSSDRLNCE) constitute an EGF-like 4; calcium-binding domain. A mediates interaction with TIMP3 region spans residues 259-493 (DASNQCAQQC…LTIIVGPFSF (235 aa)). The 40-residue stretch at 294-333 (DIDECRTSSYLCQYQCVNEPGKFSCMCPQGYQVVRSRTCQ) folds into the EGF-like 5; calcium-binding domain. An EGF-like 6; calcium-binding domain is found at 334–378 (DINECETTNECREDEMCWNYHGGFRCYPQNPCQDPYVLTSENRCV).

The protein belongs to the fibulin family. As to quaternary structure, interacts with ECM1. Interacts with TIMP3. Expressed by olfactory ensheathing cells (at protein level). Detected in lung, intestine and kidney.

Its subcellular location is the secreted. The protein localises to the extracellular space. The protein resides in the extracellular matrix. In terms of biological role, binds EGFR, the EGF receptor, inducing EGFR autophosphorylation and the activation of downstream signaling pathways. May play a role in cell adhesion and migration. May function as a negative regulator of chondrocyte differentiation. In the olfactory epithelium, it may regulate glial cell migration, differentiation and the ability of glial cells to support neuronal neurite outgrowth. This chain is EGF-containing fibulin-like extracellular matrix protein 1 (Efemp1), found in Rattus norvegicus (Rat).